We begin with the raw amino-acid sequence, 88 residues long: Small ribosomal subunit protein uS15c (88 aa).

Belongs to the universal ribosomal protein uS15 family. In terms of assembly, part of the 30S ribosomal subunit.

Its subcellular location is the plastid. The protein resides in the chloroplast. The sequence is that of Small ribosomal subunit protein uS15c (rps15) from Draba nemorosa (Woodland whitlowgrass).